The sequence spans 347 residues: UDP-N-acetylenolpyruvoylglucosamine reductase (347 aa).

Residues 23–197 enclose the FAD-binding PCMH-type domain; sequence LPARAARLLR…LRVRFRLPQA (175 aa). Residue R174 is part of the active site. The active-site Proton donor is S247. E343 is an active-site residue.

This sequence belongs to the MurB family. FAD serves as cofactor.

It is found in the cytoplasm. The enzyme catalyses UDP-N-acetyl-alpha-D-muramate + NADP(+) = UDP-N-acetyl-3-O-(1-carboxyvinyl)-alpha-D-glucosamine + NADPH + H(+). It participates in cell wall biogenesis; peptidoglycan biosynthesis. In terms of biological role, cell wall formation. The polypeptide is UDP-N-acetylenolpyruvoylglucosamine reductase (Azoarcus sp. (strain BH72)).